A 676-amino-acid chain; its full sequence is Polyunsaturated fatty acid lipoxygenase ALOX15B (676 aa).

Positions 2 to 124 constitute a PLAT domain; the sequence is AEFRVRVSTG…TLVLQEGTAK (123 aa). G15, G17, D39, N40, G42, E44, D85, and A86 together coordinate Ca(2+). One can recognise a Lipoxygenase domain in the interval 125–676; the sequence is VSWADHHPVL…PPLIENSVSI (552 aa). Fe cation is bound by residues H373, H378, H553, and I676.

The protein belongs to the lipoxygenase family. Fe cation is required as a cofactor. In terms of tissue distribution, expressed in hair, prostate, lung, ovary, lymph node, spinal cord and cornea.

It localises to the nucleus. The protein localises to the cytoplasm. It is found in the cytosol. The protein resides in the cell membrane. Its subcellular location is the cytoskeleton. It localises to the membrane. The protein localises to the cell junction. It is found in the adherens junction. The protein resides in the focal adhesion. The catalysed reaction is (5Z,8Z,11Z,14Z)-eicosatetraenoate + O2 = (15S)-hydroperoxy-(5Z,8Z,11Z,13E)-eicosatetraenoate. It catalyses the reaction (9Z,12Z)-octadecadienoate + O2 = 13-hydroperoxy-(9Z,11E)-octadecadienoate. The enzyme catalyses (5S)-hydroxy-(6E,8Z,11Z,14Z)-eicosatetraenoate + O2 = (5S)-hydroxy-(15S)-hydroperoxy-(6E,8Z,11Z,13E)-eicosatetraenoate. It carries out the reaction (5Z,8Z,11Z,14Z)-eicosatetraenoate + O2 = 5-hydroperoxy-(6E,8Z,11Z,14Z)-eicosatetraenoate. The catalysed reaction is (5S,6R)-dihydroxy-(7E,9E,11Z,14Z)-eicosatetraenoate + O2 = (5S,6R)-dihydroxy-(15S)-hydroperoxy-(7E,9E,11Z,13E)-eicosatetraenoate. It catalyses the reaction (5S)-hydroperoxy-(6E,8Z,11Z,14Z)-eicosatetraenoate + O2 = (5S,15S)-dihydroperoxy-(6E,8Z,11Z,13E)-eicosatetraenoate. The enzyme catalyses 2-(5Z,8Z,11Z,14Z-eicosatetraenoyl)-glycerol + O2 = 2-[15(S)-hydroperoxy-(5Z,8Z,11Z,13E)-eicosatetraenoyl]-glycerol. It carries out the reaction (8S)-hydroperoxy-(5Z,9E,11Z,14Z)-eicosatetraenoate + O2 = (8S,15S)-dihydroperoxy-(5Z,9E,11Z,13E)-eicosatetraenoate. The catalysed reaction is N-(5Z,8Z,11Z,14Z)-eicosatetraenoyl-L-alanine + O2 = N-(15S)-hydroperoxy-(5Z,8Z,11Z,13E)-eicosatetraenoyl-alanine. It catalyses the reaction N-(5Z,8Z,11Z,14Z)-eicosatetraenoyl-gamma-aminobutanoate + O2 = N-(15S)-hydroperoxy-(5Z,8Z,11Z,13E)-eicosatetraenoyl-gamma-aminobutanoate. The enzyme catalyses N-(5Z,8Z,11Z,14Z)-eicosatetraenoyl-glycine + O2 = N-(15S)-hydroperoxy-(5Z,8Z,11Z,13E)-eicosatetraenoyl-glycine. It carries out the reaction N-(5Z,8Z,11Z,14Z)-eicosatetraenoyl-taurine + O2 = N-(15S)-hydroperoxy-(5Z,8Z,11Z,13E)-eicosatetraenoyl-taurine. The catalysed reaction is 2-(5Z,8Z,11Z,14Z-eicosatetraenoyl)-glycerol + O2 = 2-[12-hydroperoxy-(5Z,8Z,10E,14Z)-eicosatetraenoyl]-glycerol. It catalyses the reaction 1-octadecanoyl-2-(5Z,8Z,11Z,14Z-eicosatetraenoyl)-sn-glycero-3-phosphocholine + O2 = 1-octadecanoyl-2-(15-hydroperoxy-5Z,8Z,11Z,13E-eicosatetraenoyl)-sn-glycero-3-phosphocholine. The enzyme catalyses a 1-acyl-2-(5Z,8Z,11Z,14Z-eicosatetraenoyl)-sn-glycero-3-phospho-(1D-myo-inositol) + O2 = a 1-acyl-2-(15-hydroperoxy-5Z,8Z,11Z,13E-eicosatetraenoyl)-sn-glycero-3-phospho-(1D-myo-inositol). It carries out the reaction a 1-acyl-2-(8Z,11Z,14Z-eicosatrienoyl)-sn-glycero-3-phospho-(1D-myo-inositol) + O2 = a 1-acyl-2-(15-hydroperoxy-8Z,11Z,13E-eicosatrienoyl)-sn-glycero-3-phospho-(1D-myo-inositol). The catalysed reaction is 1-octadecanoyl-2-(5Z,8Z,11Z,14Z)-eicosatetraenoyl-sn-glycero-3-phosphoethanolamine + O2 = 1-octadecanoyl-2-(15-hydroperoxy-5Z,8Z,11Z,13E-eicosatetraenoyl)-sn-glycero-3-phosphoethanolamine. It catalyses the reaction 1-octadecanoyl-2-(5Z,8Z,11Z,14Z-eicosatetraenoyl)-sn-glycero-3-phospho-(1D-myo-inositol) + O2 = 1-octadecanoyl-2-(15-hydroperoxy-5Z,8Z,11Z,13E-eicosatetraenoyl)-sn-glycero-3-phospho-(1D-myo-inositol). The enzyme catalyses (8Z,11Z,14Z)-eicosatrienoate + O2 = 15-hydroperoxy-(8Z,11Z,13E)-eicosatrienoate. It carries out the reaction (7S)-hydroperoxy-(4Z,8E,10Z,13Z,16Z,19Z)-docosahexaenoate + O2 = (7S,17S)-dihydroperoxy-(4Z,8E,10Z,13Z,15E,19Z)-docosahexaenoate. The catalysed reaction is (5Z,8Z,11Z,14Z)-eicosatetraenoate + O2 = 15-hydroperoxy-(5Z,8Z,11Z,13E)-eicosatetraenoate. Its pathway is lipid metabolism; hydroperoxy eicosatetraenoic acid biosynthesis. In terms of biological role, non-heme iron-containing dioxygenase that catalyzes the stereo-specific peroxidation of free and esterified polyunsaturated fatty acids (PUFAs) generating a spectrum of bioactive lipid mediators. It inserts peroxyl groups at C15 of arachidonate ((5Z,8Z,11Z,14Z)-eicosatetraenoate) producing (15S)-hydroperoxyeicosatetraenoate/(15S)-HPETE. Also peroxidizes linoleate ((9Z,12Z)-octadecadienoate) to 13-hydroperoxyoctadecadienoate/13-HPODE. Oxygenates arachidonyl derivatives such as 2-arachidonoylglycerol (2-AG) leading to the production and extracellular release of 15-hydroxyeicosatetraenoyl glycerol (15-HETE-G) that acts as a peroxisome proliferator-activated receptor alpha agonist. Has the ability to efficiently class-switch ALOX5 pro-inflammatory mediators into anti-inflammatory intermediates. Participates in the sequential oxidations of DHA ((4Z,7Z,10Z,13Z,16Z,19Z)-docosahexaenoate) to generate specialized pro-resolving mediators (SPMs) resolvin D5 ((7S,17S)-diHPDHA), which can actively down-regulate the immune response and have anti-aggregation properties with platelets. In addition to free PUFAs hydrolyzed from phospholipids, it directly oxidizes PUFAs esterified to membrane-bound phospholipids. Has no detectable 8S-lipoxygenase activity on arachidonate but reacts with (8S)-HPETE to produce (8S,15S)-diHPETE. May regulate progression through the cell cycle and cell proliferation. May also regulate cytokine secretion by macrophages and therefore play a role in the immune response. May also regulate macrophage differentiation into proatherogenic foam cells. Functionally, does not convert arachidonic acid to 15S-hydroperoxyeicosatetraenoic acid/(15S)-HPETE. The protein is Polyunsaturated fatty acid lipoxygenase ALOX15B of Homo sapiens (Human).